A 250-amino-acid chain; its full sequence is Global transcriptional regulator CodY (250 aa).

The GAF domain stretch occupies residues 1-146 (MTLLEKTRKL…GATVVGLEIL (146 aa)). A DNA-binding region (H-T-H motif) is located at residues 194-213 (ASKIADKVGITRSVIVNALR).

Belongs to the CodY family.

It is found in the cytoplasm. Its function is as follows. DNA-binding global transcriptional regulator which is involved in the adaptive response to starvation and acts by directly or indirectly controlling the expression of numerous genes in response to nutrient availability. During rapid exponential growth, CodY is highly active and represses genes whose products allow adaptation to nutrient depletion. This is Global transcriptional regulator CodY from Caldanaerobacter subterraneus subsp. tengcongensis (strain DSM 15242 / JCM 11007 / NBRC 100824 / MB4) (Thermoanaerobacter tengcongensis).